The primary structure comprises 267 residues: Carboxy-S-adenosyl-L-methionine synthase (267 aa).

Residues 1-11 (MPNRDTQSQND) show a composition bias toward polar residues. Residues 1–25 (MPNRDTQSQNDTPRHSPEAAEPQRD) form a disordered region. A compositionally biased stretch (basic and acidic residues) spans 12 to 24 (TPRHSPEAAEPQR). Residues Y59, 84–86 (GCS), 109–110 (DN), 137–138 (DI), N152, and R219 each bind S-adenosyl-L-methionine.

It belongs to the class I-like SAM-binding methyltransferase superfamily. Cx-SAM synthase family. Homodimer.

It carries out the reaction prephenate + S-adenosyl-L-methionine = carboxy-S-adenosyl-L-methionine + 3-phenylpyruvate + H2O. Catalyzes the conversion of S-adenosyl-L-methionine (SAM) to carboxy-S-adenosyl-L-methionine (Cx-SAM). The polypeptide is Carboxy-S-adenosyl-L-methionine synthase (Yersinia pseudotuberculosis serotype O:1b (strain IP 31758)).